Consider the following 292-residue polypeptide: Bis(5'-nucleosyl)-tetraphosphatase, symmetrical (292 aa).

Belongs to the Ap4A hydrolase family.

It catalyses the reaction P(1),P(4)-bis(5'-adenosyl) tetraphosphate + H2O = 2 ADP + 2 H(+). Its function is as follows. Hydrolyzes diadenosine 5',5'''-P1,P4-tetraphosphate to yield ADP. This Yersinia enterocolitica serotype O:8 / biotype 1B (strain NCTC 13174 / 8081) protein is Bis(5'-nucleosyl)-tetraphosphatase, symmetrical.